Here is a 424-residue protein sequence, read N- to C-terminus: MIRIDLKQDEMPDHWYNILPDLPEELPTPRDETGEAFDTLKKAVPAKVLEYEFSGERYPKIPDEILERYMQVGRPTPIIRAKKLEELLGGNLKIFLKMESYTYSGSHKINSALAHVFFAREEGAKFVSTETGAGQWGSAVALASALFHMESHIFMVRTSFYAKPYRKYMMYMYGAHPHPSPSEFTEYGREVLKRMPDTPGSLGLAISEAIHYALDNGGKYIAGSVINSDILFKTIAGMEAKKQMEMAGEDPDYIVGVVGGGSNYAALAFPFLADELSSGKIRRTYIASGSKEVPKMTEGEYRYDYPDTGKVLPLLKMYTIGYDFIPPAVYAGGLRYHAVAPTLSLLMNKGIVSARDYDQEEAFKWARIFSETEGYIPAPETSHALPILKEIADKNRGEKKTVLVSFSGHGLLDLGNYAEALHFE.

Lysine 108 carries the N6-(pyridoxal phosphate)lysine modification.

This sequence belongs to the TrpB family. In terms of assembly, tetramer of two alpha and two beta chains. Pyridoxal 5'-phosphate is required as a cofactor.

The catalysed reaction is (1S,2R)-1-C-(indol-3-yl)glycerol 3-phosphate + L-serine = D-glyceraldehyde 3-phosphate + L-tryptophan + H2O. It participates in amino-acid biosynthesis; L-tryptophan biosynthesis; L-tryptophan from chorismate: step 5/5. Its function is as follows. The beta subunit is responsible for the synthesis of L-tryptophan from indole and L-serine. The polypeptide is Tryptophan synthase beta chain (trpB) (Thermoplasma acidophilum (strain ATCC 25905 / DSM 1728 / JCM 9062 / NBRC 15155 / AMRC-C165)).